A 226-amino-acid chain; its full sequence is uncharacterized protein (226 aa).

The N-acetyltransferase domain occupies 18–219; sequence LTIRNYTETD…YGVLMEWKNV (202 aa).

This sequence belongs to the acetyltransferase family.

This is an uncharacterized protein from Bacillus subtilis (strain 168).